Here is a 391-residue protein sequence, read N- to C-terminus: Phosphoglycerate kinase (391 aa).

Substrate is bound by residues 21-23 (DLN), Arg-36, 59-62 (HLGR), Arg-113, and Arg-146. Residues Lys-197, Glu-319, and 345–348 (GGDT) contribute to the ATP site.

This sequence belongs to the phosphoglycerate kinase family. In terms of assembly, monomer.

The protein resides in the cytoplasm. The enzyme catalyses (2R)-3-phosphoglycerate + ATP = (2R)-3-phospho-glyceroyl phosphate + ADP. It participates in carbohydrate degradation; glycolysis; pyruvate from D-glyceraldehyde 3-phosphate: step 2/5. The chain is Phosphoglycerate kinase from Xanthomonas oryzae pv. oryzae (strain PXO99A).